The primary structure comprises 379 residues: MSKRDYYEVLGVQKGASADDLKKAYRKLAMQYHPDRNQGDKAAEQKFKEISEAYDVLKDDQKRAAYDRFGHAAFENGRGGPGAGAAGFDFNFGSGFADIFDEMFGEFMGRGRAGQTSNRGADLRYNLEITLEDAFKGATTTVRVPTSVACESCNGTGAEGGSTPIACPTCNGHGKVRAQQGFFTIERTCPACHGVGRVIKDPCRTCGGQGRVRKEKTLSVNIPAGVEDGTRIRLAGEGEAGLRGGPPGDLYIFLAIAPHRFFQRDGANLQCRVPIPMTTAALGGSVEVPTIDGSRAKIAIPAGTQTGHQFRLKGKGMSVLRSPARGDLYIQVVVETPVNLTKKQQELLREFEKAGQDGLHPESEGFFAKVKELWADLKD.

In terms of domain architecture, J spans Asp5–Gly70. Residues Gly137–Glu215 form a CR-type zinc finger. Zn(2+)-binding residues include Cys150, Cys153, Cys167, Cys170, Cys189, Cys192, Cys203, and Cys206. 4 CXXCXGXG motif repeats span residues Cys150 to Gly157, Cys167 to Gly174, Cys189 to Gly196, and Cys203 to Gly210.

It belongs to the DnaJ family. As to quaternary structure, homodimer. It depends on Zn(2+) as a cofactor.

It localises to the cytoplasm. Its function is as follows. Participates actively in the response to hyperosmotic and heat shock by preventing the aggregation of stress-denatured proteins and by disaggregating proteins, also in an autonomous, DnaK-independent fashion. Unfolded proteins bind initially to DnaJ; upon interaction with the DnaJ-bound protein, DnaK hydrolyzes its bound ATP, resulting in the formation of a stable complex. GrpE releases ADP from DnaK; ATP binding to DnaK triggers the release of the substrate protein, thus completing the reaction cycle. Several rounds of ATP-dependent interactions between DnaJ, DnaK and GrpE are required for fully efficient folding. Also involved, together with DnaK and GrpE, in the DNA replication of plasmids through activation of initiation proteins. In Rhodospirillum centenum (strain ATCC 51521 / SW), this protein is Chaperone protein DnaJ.